The primary structure comprises 627 residues: Sodium- and chloride-dependent GABA transporter 3 (627 aa).

The segment at 1–36 (MTAEQALPLGNGKAAEEARGSEALGGGGGGAAGTRE) is disordered. The Cytoplasmic portion of the chain corresponds to 1–53 (MTAEQALPLGNGKAAEEARGSEALGGGGGGAAGTREARDKAVHERGHWNNKVE). Ser-21 is modified (phosphoserine). Residues 23–32 (ALGGGGGGAA) are compositionally biased toward gly residues. A run of 3 helical transmembrane segments spans residues 54–74 (FVLS…FPYL), 82–101 (AFLI…VFFL), and 126–146 (GIGY…IIIL). The Extracellular segment spans residues 147-220 (AWAIFYLSNC…DGIEHIGNLR (74 aa)). Asn-182, Asn-185, and Asn-193 each carry an N-linked (GlcNAc...) asparagine glycan. 9 helical membrane-spanning segments follow: residues 221 to 239 (WELA…FCIW), 248 to 265 (VVYV…ILLI), 301 to 318 (IFFS…LGSY), 330 to 351 (IMLC…FSVL), 384 to 403 (MPLS…FLGL), 433 to 451 (LLIL…VMLT), 468 to 488 (GMCL…VYGS), 509 to 528 (WCWK…FFLV), and 548 to 566 (IGWL…WIFI). Residues 567–627 (KLWKTEGTLP…SAITEKETHF (61 aa)) are Cytoplasmic-facing.

Belongs to the sodium:neurotransmitter symporter (SNF) (TC 2.A.22) family. SLC6A11 subfamily. As to expression, brain and retina. Expressed predominantly within neurons. Expressed in the hippocampus (at protein level).

It is found in the cell membrane. It carries out the reaction 4-aminobutanoate(out) + chloride(out) + 2 Na(+)(out) = 4-aminobutanoate(in) + chloride(in) + 2 Na(+)(in). The enzyme catalyses taurine(out) + chloride(out) + 2 Na(+)(out) = taurine(in) + chloride(in) + 2 Na(+)(in). It catalyses the reaction beta-alanine(out) + chloride(out) + 2 Na(+)(out) = beta-alanine(in) + chloride(in) + 2 Na(+)(in). The catalysed reaction is hypotaurine(out) + chloride(out) + 2 Na(+)(out) = hypotaurine(in) + chloride(in) + 2 Na(+)(in). With respect to regulation, GABA transport is inhibited by beta-alanine. Its function is as follows. Mediates sodium- and chloride-dependent transport of gamma-aminobutyric acid (GABA). Can also mediate transport of beta-alanine and to a lower extent that of taurine and hypotaurine. The sequence is that of Sodium- and chloride-dependent GABA transporter 3 (Slc6a11) from Rattus norvegicus (Rat).